The chain runs to 323 residues: Beta-ketoacyl-[acyl-carrier-protein] synthase III (323 aa).

Active-site residues include C113 and H250. Residues 251–255 (QANKR) form an ACP-binding region. Residue N280 is part of the active site.

Belongs to the thiolase-like superfamily. FabH family. As to quaternary structure, homodimer.

Its subcellular location is the cytoplasm. The enzyme catalyses malonyl-[ACP] + acetyl-CoA + H(+) = 3-oxobutanoyl-[ACP] + CO2 + CoA. Its pathway is lipid metabolism; fatty acid biosynthesis. Catalyzes the condensation reaction of fatty acid synthesis by the addition to an acyl acceptor of two carbons from malonyl-ACP. Catalyzes the first condensation reaction which initiates fatty acid synthesis and may therefore play a role in governing the total rate of fatty acid production. Possesses both acetoacetyl-ACP synthase and acetyl transacylase activities. Its substrate specificity determines the biosynthesis of branched-chain and/or straight-chain of fatty acids. This Brucella canis (strain ATCC 23365 / NCTC 10854 / RM-666) protein is Beta-ketoacyl-[acyl-carrier-protein] synthase III.